The sequence spans 92 residues: Probable Fe(2+)-trafficking protein (92 aa).

The protein belongs to the Fe(2+)-trafficking protein family.

Functionally, could be a mediator in iron transactions between iron acquisition and iron-requiring processes, such as synthesis and/or repair of Fe-S clusters in biosynthetic enzymes. This is Probable Fe(2+)-trafficking protein from Shewanella piezotolerans (strain WP3 / JCM 13877).